The sequence spans 371 residues: Transposase for insertion sequence element IS421 (371 aa).

Belongs to the transposase 11 family.

Its function is as follows. Involved in the transposition of the insertion sequence IS421. This chain is Transposase for insertion sequence element IS421, found in Escherichia coli.